The following is a 498-amino-acid chain: MTELLKLSAAELGAAIASGETSAVEATQAYLDRIAEVDGQIHAFLHVAADKALEQARAVDARRAAGEKLGPLAGVPVAHKDVFTTKDMPTTAASKILEGWQSPYDATVTERLRDAGLVILGKTNLDEFAMGSSTENSAYGPTRNPWDTDRVPGGSSGGSSAAVAAFEAPLATGTDTGGSIRQPAAVCGLVGAKPTYGTSSRYGLIAFASSLDTPGPIARNVLDAALLHEAFSGHDPRDSTSVNEPVPPVVEAARRADVSGMRIGVVKELSGEGYQPGVMQRFTEAVELFESLGAKIVEVSCPSFTAALAAYYLIAPSECSSNLARFDAMRYGLRVGDDGTRSADEVMALTRAQGFGPEVKRRIILGTYALSSGYYDAYYGSAQKVRTLIKRDFEAAFQQADVLVSPTTPTTAFRLGERIDDPMAMYLADLCTIPTNLAGNAALSVPCGLAPEDNMPVGLHIMAPTLADDRAYQAGAAVEAALRDKWGGDLLSQCAYAV.

Residues Lys80 and Ser155 each act as charge relay system in the active site. A disordered region spans residues 132–159 (SSTENSAYGPTRNPWDTDRVPGGSSGGS). The active-site Acyl-ester intermediate is the Ser179.

This sequence belongs to the amidase family. GatA subfamily. As to quaternary structure, heterotrimer of A, B and C subunits.

The enzyme catalyses L-glutamyl-tRNA(Gln) + L-glutamine + ATP + H2O = L-glutaminyl-tRNA(Gln) + L-glutamate + ADP + phosphate + H(+). In terms of biological role, allows the formation of correctly charged Gln-tRNA(Gln) through the transamidation of misacylated Glu-tRNA(Gln) in organisms which lack glutaminyl-tRNA synthetase. The reaction takes place in the presence of glutamine and ATP through an activated gamma-phospho-Glu-tRNA(Gln). In Thermobifida fusca (strain YX), this protein is Glutamyl-tRNA(Gln) amidotransferase subunit A.